Reading from the N-terminus, the 137-residue chain is Small ribosomal subunit protein uS9 (137 aa).

The interval 105-137 is disordered; the sequence is LKAEGYLTRDPRAKERKKYGLHKARKAPQYSKR. The segment covering 118–137 has biased composition (basic residues); sequence KERKKYGLHKARKAPQYSKR.

It belongs to the universal ribosomal protein uS9 family.

This chain is Small ribosomal subunit protein uS9 (rpsI), found in Synechocystis sp. (strain ATCC 27184 / PCC 6803 / Kazusa).